The sequence spans 937 residues: Putative leucine-rich repeat receptor-like serine/threonine-protein kinase At3g53590 (937 aa).

The N-terminal stretch at 1-20 (MIPPNINVLIRSICINLVTS) is a signal peptide. Topologically, residues 21-547 (LPLNFAYIFI…LLAQTSGIRT (527 aa)) are extracellular. 4 N-linked (GlcNAc...) asparagine glycosylation sites follow: N50, N63, N90, and N114. 8 LRR repeats span residues 102-126 (LLYL…IGRI), 127-150 (SSLK…LGNL), 152-173 (NLNR…SFGN), 174-198 (LRSI…LSKL), 200-222 (KLVH…LAQL), 223-249 (PSLT…HFSR), 251-270 (VKLS…LSRI), and 271-294 (ENLS…KLSD). 3 N-linked (GlcNAc...) asparagine glycosylation sites follow: N162, N184, and N210. 2 N-linked (GlcNAc...) asparagine glycosylation sites follow: N272 and N295. LRR repeat units lie at residues 296-316 (MTTI…SFSD), 317-341 (LNSL…IWQD), and 343-360 (SFEN…NFSD). 6 N-linked (GlcNAc...) asparagine glycosylation sites follow: N327, N357, N370, N413, N499, and N516. Residues 548–568 (IVWMMIVAGSVVAATVLSVTA) form a helical membrane-spanning segment. Over 569 to 937 (TLLYVRKRRE…SGFFHAVKPR (369 aa)) the chain is Cytoplasmic. A Protein kinase domain is found at 614-886 (FDSSTLIGRG…SKVVKELEGI (273 aa)). ATP contacts are provided by residues 620–628 (IGRGSYGKV) and K642. D738 acts as the Proton acceptor in catalysis.

The protein belongs to the protein kinase superfamily. Ser/Thr protein kinase family.

It is found in the cell membrane. It carries out the reaction L-seryl-[protein] + ATP = O-phospho-L-seryl-[protein] + ADP + H(+). The catalysed reaction is L-threonyl-[protein] + ATP = O-phospho-L-threonyl-[protein] + ADP + H(+). This chain is Putative leucine-rich repeat receptor-like serine/threonine-protein kinase At3g53590, found in Arabidopsis thaliana (Mouse-ear cress).